A 348-amino-acid polypeptide reads, in one-letter code: MTYNIVALPGDGIGPEILNGSLSLLEIISNKYNFNYQIEHHEFGGASIDTFGEPLTEKTLNACKRADAILLGAIGGPKWTDPNNRPEQGLLKLRKSLNLFVNIRPTTVVKGASSLSPLKEERVEGTDLVIVRELTSGIYFGEPRHFNNHEALDSLTYTREEIERIVHVAFKLAASRRGKLTSVDKENVLASSKLWRKVVNEVSQLYPEVTVNHLLVDACSMHLITNPKQFDVIVCENLFGDILSDEASVIPGSLGLSPSASFSNDGPRLYEPIHGSAPDIAGKNVANPFGMILSLAMCLRESLNQPDAADELEQHIYSMIEHGQTTADLGGKLNTTDIFEILSQKLNH.

76 to 87 (GPKWTDPNNRPE) provides a ligand contact to NAD(+). Substrate-binding residues include arginine 94, arginine 104, arginine 132, and aspartate 217. Aspartate 217, aspartate 241, and aspartate 245 together coordinate Mg(2+). An NAD(+)-binding site is contributed by 275–287 (GSAPDIAGKNVAN).

This sequence belongs to the isocitrate and isopropylmalate dehydrogenases family. LeuB type 1 subfamily. As to quaternary structure, homodimer. The cofactor is Mg(2+). Mn(2+) serves as cofactor.

The protein localises to the cytoplasm. It carries out the reaction (2R,3S)-3-isopropylmalate + NAD(+) = 4-methyl-2-oxopentanoate + CO2 + NADH. It participates in amino-acid biosynthesis; L-leucine biosynthesis; L-leucine from 3-methyl-2-oxobutanoate: step 3/4. Catalyzes the oxidation of 3-carboxy-2-hydroxy-4-methylpentanoate (3-isopropylmalate) to 3-carboxy-4-methyl-2-oxopentanoate. The product decarboxylates to 4-methyl-2 oxopentanoate. The sequence is that of 3-isopropylmalate dehydrogenase from Staphylococcus aureus (strain COL).